Consider the following 81-residue polypeptide: Protein L83L (81 aa).

The disordered stretch occupies residues 1 to 28 (MDTSLKNNDGALDADNKNYQDYKDEPDK). A compositionally biased stretch (basic and acidic residues) spans 14-28 (ADNKNYQDYKDEPDK).

This sequence belongs to the asfivirus L83L family. In terms of assembly, interacts with host IL1B.

The protein resides in the host cytoplasm. Functionally, may subvert the host innate immune response by interacting with host IL1B and interfering with its function. This African swine fever virus (isolate Tick/South Africa/Pretoriuskop Pr4/1996) (ASFV) protein is Protein L83L.